Reading from the N-terminus, the 382-residue chain is MGIKGLSQVIADNAPSAIKVNEMKAFFGRTVAIDASMCLYQFLIAVRQDGSQLQSEDGETTSHLMGMLNRTVRMFENGVKPVYVFDGKPPDMKGGELEKRSERRAEAEKALTEAKEKGDVKEAEKFERRLVKVTKQQNDEAKRLLGLMGIPVVEAPCEAEAQCAHLVKAGKVFGTVTEDMDALTFGSTVLLRHFLAPVAKKIPIKEFNLSLALEEMKLSVEEFIDLCILLGCDYCGTIRGVGPKKAVELIRQHKNIETILENIDQNKYPPPEDWPYKRARELFLNPEVTKPEEVELTWKEADVEGVIQFLCGEKNFNEERIRNALAKLKTSRKSGTQGRIDSFFGNSTKVTCVTAATKRKAEEAEKAKKGAKKGGPPKKRAK.

Residues 1 to 104 form an N-domain region; the sequence is MGIKGLSQVI…GELEKRSERR (104 aa). Position 34 (Asp34) interacts with Mg(2+). Residues Arg47 and Arg70 each coordinate DNA. 5 residues coordinate Mg(2+): Asp86, Glu158, Glu160, Asp179, and Asp181. An I-domain region spans residues 122-253; that stretch reads EAEKFERRLV…KKAVELIRQH (132 aa). A DNA-binding site is contributed by Glu158. DNA is bound by residues Gly231 and Asp233. Asp233 is a binding site for Mg(2+). An interaction with PCNA region spans residues 336-344; sequence TQGRIDSFF. The interval 358–382 is disordered; the sequence is KRKAEEAEKAKKGAKKGGPPKKRAK. The segment covering 359–368 has biased composition (basic and acidic residues); sequence RKAEEAEKAK. The segment covering 369-382 has biased composition (basic residues); that stretch reads KGAKKGGPPKKRAK.

It belongs to the XPG/RAD2 endonuclease family. FEN1 subfamily. In terms of assembly, interacts with PCNA. Three molecules of crn-1 bind to one PCNA trimer with each molecule binding to one PCNA monomer. PCNA stimulates the nuclease activity without altering cleavage specificity. Interacts with cps-6. It depends on Mg(2+) as a cofactor. Phosphorylated. Phosphorylation upon DNA damage induces relocalization to the nuclear plasma.

The protein localises to the nucleus. It is found in the nucleolus. Its subcellular location is the nucleoplasm. The protein resides in the mitochondrion. Its function is as follows. Structure-specific nuclease with 5'-flap endonuclease and 5'-3' exonuclease activities involved in DNA replication and repair. During DNA replication, cleaves the 5'-overhanging flap structure that is generated by displacement synthesis when DNA polymerase encounters the 5'-end of a downstream Okazaki fragment. It enters the flap from the 5'-end and then tracks to cleave the flap base, leaving a nick for ligation. Also involved in the long patch base excision repair (LP-BER) pathway, by cleaving within the apurinic/apyrimidinic (AP) site-terminated flap. Acts as a genome stabilization factor that prevents flaps from equilibrating into structures that lead to duplications and deletions. Also possesses 5'-3' exonuclease activity on nicked or gapped double-stranded DNA, and exhibits RNase H activity. Also involved in replication and repair of rDNA and in repairing mitochondrial DNA. Can associate and cooperate with cps-6 to promote stepwise DNA fragmentation, utilizing the endonuclease activity of cps-6 and both of its own 5'-3' exonuclease activity and gap-dependent endonuclease activity. May play a critical role in switching the state of cells from DNA replication/repair to DNA degradation during apoptosis. This is Flap endonuclease 1 from Caenorhabditis elegans.